The primary structure comprises 340 residues: Protein arginine N-methyltransferase 1 (340 aa).

An SAM-dependent MTase PRMT-type domain is found at 16-311; that stretch reads KDYYFDSYSH…TCKPAEGNHR (296 aa). Tyr-19 bears the Phosphotyrosine mark. Residues His-29, Arg-38, Gly-62, Asp-84, and Glu-113 each contribute to the S-adenosyl-L-methionine site. Active-site residues include Glu-128 and Glu-137. The residue at position 176 (Ser-176) is a Phosphoserine.

The protein belongs to the class I-like SAM-binding methyltransferase superfamily. Protein arginine N-methyltransferase family. In terms of assembly, interacts with pab2.

The protein resides in the nucleus. It carries out the reaction L-arginyl-[protein] + S-adenosyl-L-methionine = N(omega)-methyl-L-arginyl-[protein] + S-adenosyl-L-homocysteine + H(+). It catalyses the reaction L-arginyl-[protein] + 2 S-adenosyl-L-methionine = N(omega),N(omega)-dimethyl-L-arginyl-[protein] + 2 S-adenosyl-L-homocysteine + 2 H(+). In terms of biological role, S-adenosyl-L-methionine-dependent protein-arginine N-methyltransferase that catalyzes both the mono- and asymmetric (type I) dimethylation of the guanidino nitrogens of arginine residues in target proteins. Asymmetrically dimethylates the polyadenylate-binding protein pab2, modulating pab2 oligomerization. This Schizosaccharomyces pombe (strain 972 / ATCC 24843) (Fission yeast) protein is Protein arginine N-methyltransferase 1.